A 159-amino-acid polypeptide reads, in one-letter code: Phosphopantetheine adenylyltransferase (159 aa).

Ser9 provides a ligand contact to substrate. ATP is bound by residues 9–10 and His17; that span reads SF. Residues Lys41, Leu73, and Lys87 each contribute to the substrate site. ATP contacts are provided by residues 88 to 90, Glu98, and 122 to 128; these read GLR and YSFLSSS.

Belongs to the bacterial CoaD family. In terms of assembly, homohexamer. The cofactor is Mg(2+).

The protein resides in the cytoplasm. It catalyses the reaction (R)-4'-phosphopantetheine + ATP + H(+) = 3'-dephospho-CoA + diphosphate. Its pathway is cofactor biosynthesis; coenzyme A biosynthesis; CoA from (R)-pantothenate: step 4/5. Its function is as follows. Reversibly transfers an adenylyl group from ATP to 4'-phosphopantetheine, yielding dephospho-CoA (dPCoA) and pyrophosphate. The protein is Phosphopantetheine adenylyltransferase of Streptomyces griseus subsp. griseus (strain JCM 4626 / CBS 651.72 / NBRC 13350 / KCC S-0626 / ISP 5235).